Here is a 155-residue protein sequence, read N- to C-terminus: Ribosome maturation factor RimP (155 aa).

It belongs to the RimP family.

The protein localises to the cytoplasm. Its function is as follows. Required for maturation of 30S ribosomal subunits. This chain is Ribosome maturation factor RimP, found in Gloeothece citriformis (strain PCC 7424) (Cyanothece sp. (strain PCC 7424)).